A 315-amino-acid chain; its full sequence is Coproporphyrin III ferrochelatase (315 aa).

Residues Tyr13, Arg30, 46–47, Ser54, and Tyr125 each bind Fe-coproporphyrin III; that span reads RY. Fe(2+)-binding residues include His183 and Glu264.

This sequence belongs to the ferrochelatase family.

It is found in the cytoplasm. It carries out the reaction Fe-coproporphyrin III + 2 H(+) = coproporphyrin III + Fe(2+). Its pathway is porphyrin-containing compound metabolism; protoheme biosynthesis. In terms of biological role, involved in coproporphyrin-dependent heme b biosynthesis. Catalyzes the insertion of ferrous iron into coproporphyrin III to form Fe-coproporphyrin III. This chain is Coproporphyrin III ferrochelatase, found in Anoxybacillus flavithermus (strain DSM 21510 / WK1).